Consider the following 72-residue polypeptide: Translation initiation factor IF-1 2 (72 aa).

One can recognise an S1-like domain in the interval 1 to 72 (MSKDDVIEVE…TRGRIVYRYK (72 aa)).

Belongs to the IF-1 family. In terms of assembly, component of the 30S ribosomal translation pre-initiation complex which assembles on the 30S ribosome in the order IF-2 and IF-3, IF-1 and N-formylmethionyl-tRNA(fMet); mRNA recruitment can occur at any time during PIC assembly.

The protein localises to the cytoplasm. Its function is as follows. One of the essential components for the initiation of protein synthesis. Stabilizes the binding of IF-2 and IF-3 on the 30S subunit to which N-formylmethionyl-tRNA(fMet) subsequently binds. Helps modulate mRNA selection, yielding the 30S pre-initiation complex (PIC). Upon addition of the 50S ribosomal subunit IF-1, IF-2 and IF-3 are released leaving the mature 70S translation initiation complex. This is Translation initiation factor IF-1 2 from Symbiobacterium thermophilum (strain DSM 24528 / JCM 14929 / IAM 14863 / T).